A 271-amino-acid polypeptide reads, in one-letter code: 3-methyl-2-oxobutanoate hydroxymethyltransferase (271 aa).

Residues aspartate 53 and aspartate 92 each contribute to the Mg(2+) site. Residues 53 to 54 (DS), aspartate 92, and lysine 120 contribute to the 3-methyl-2-oxobutanoate site. Glutamate 122 is a Mg(2+) binding site. Glutamate 189 functions as the Proton acceptor in the catalytic mechanism.

The protein belongs to the PanB family. In terms of assembly, homodecamer; pentamer of dimers. Mg(2+) serves as cofactor.

The protein resides in the cytoplasm. The catalysed reaction is 3-methyl-2-oxobutanoate + (6R)-5,10-methylene-5,6,7,8-tetrahydrofolate + H2O = 2-dehydropantoate + (6S)-5,6,7,8-tetrahydrofolate. It functions in the pathway cofactor biosynthesis; (R)-pantothenate biosynthesis; (R)-pantoate from 3-methyl-2-oxobutanoate: step 1/2. Functionally, catalyzes the reversible reaction in which hydroxymethyl group from 5,10-methylenetetrahydrofolate is transferred onto alpha-ketoisovalerate to form ketopantoate. The sequence is that of 3-methyl-2-oxobutanoate hydroxymethyltransferase from Paraburkholderia xenovorans (strain LB400).